Consider the following 288-residue polypeptide: 4-diphosphocytidyl-2-C-methyl-D-erythritol kinase (288 aa).

K11 is a catalytic residue. 93–103 lines the ATP pocket; the sequence is PFGAGLGGGSS. D135 is an active-site residue.

The protein belongs to the GHMP kinase family. IspE subfamily.

The enzyme catalyses 4-CDP-2-C-methyl-D-erythritol + ATP = 4-CDP-2-C-methyl-D-erythritol 2-phosphate + ADP + H(+). It participates in isoprenoid biosynthesis; isopentenyl diphosphate biosynthesis via DXP pathway; isopentenyl diphosphate from 1-deoxy-D-xylulose 5-phosphate: step 3/6. In terms of biological role, catalyzes the phosphorylation of the position 2 hydroxy group of 4-diphosphocytidyl-2C-methyl-D-erythritol. This Chlorobium limicola (strain DSM 245 / NBRC 103803 / 6330) protein is 4-diphosphocytidyl-2-C-methyl-D-erythritol kinase.